Here is a 693-residue protein sequence, read N- to C-terminus: Elongation factor G (693 aa).

Residues 8 to 282 (EKFRNFGIMA…AVVDYLPSPI (275 aa)) form the tr-type G domain. GTP is bound by residues 17-24 (AHIDAGKT), 81-85 (DTPGH), and 135-138 (NKMD).

This sequence belongs to the TRAFAC class translation factor GTPase superfamily. Classic translation factor GTPase family. EF-G/EF-2 subfamily.

It localises to the cytoplasm. Its function is as follows. Catalyzes the GTP-dependent ribosomal translocation step during translation elongation. During this step, the ribosome changes from the pre-translocational (PRE) to the post-translocational (POST) state as the newly formed A-site-bound peptidyl-tRNA and P-site-bound deacylated tRNA move to the P and E sites, respectively. Catalyzes the coordinated movement of the two tRNA molecules, the mRNA and conformational changes in the ribosome. The chain is Elongation factor G from Mycoplasmoides gallisepticum (strain R(low / passage 15 / clone 2)) (Mycoplasma gallisepticum).